The primary structure comprises 129 residues: NADPH-dependent 7-cyano-7-deazaguanine reductase (129 aa).

Residue Cys-34 is the Thioimide intermediate of the active site. Catalysis depends on Asp-41, which acts as the Proton donor. Residues 56 to 58 (VEL) and 75 to 76 (HE) contribute to the substrate site.

The protein belongs to the GTP cyclohydrolase I family. QueF type 1 subfamily.

It is found in the cytoplasm. The catalysed reaction is 7-aminomethyl-7-carbaguanine + 2 NADP(+) = 7-cyano-7-deazaguanine + 2 NADPH + 3 H(+). Its pathway is tRNA modification; tRNA-queuosine biosynthesis. Catalyzes the NADPH-dependent reduction of 7-cyano-7-deazaguanine (preQ0) to 7-aminomethyl-7-deazaguanine (preQ1). This Nitrosococcus oceani (strain ATCC 19707 / BCRC 17464 / JCM 30415 / NCIMB 11848 / C-107) protein is NADPH-dependent 7-cyano-7-deazaguanine reductase.